The primary structure comprises 528 residues: Na(+)/H(+) antiporter NhaB (528 aa).

Transmembrane regions (helical) follow at residues 10–30 (IGNFLGNSPKWYKIAILSFLI), 63–83 (YPLQPGGLLAIEAVAIGMTSA), 96–116 (VLLLLVFMVAGIYFMKQLLLF), 131–165 (VSLMFCLTSAFLSAFLDALTVIAVIIAVAVGFYAI), 204–224 (LLMHAGVGTALGGVCTMVGEP), 240–260 (FVIRMSPVTVPVLIAGILTCL), 305–325 (VLVGVWLIAGLALHLASVGLV), 359–379 (LAVFFAVVAVIIDQHLFAPVI), 391–411 (LVIFYIANGLLSMVSDNVFVG), 449–469 (ATPNGQAAFLFLLTSALAPLI), and 476–496 (MVWMALPYTIVLSVVGVLAIE).

The protein belongs to the NhaB Na(+)/H(+) (TC 2.A.34) antiporter family.

Its subcellular location is the cell inner membrane. The enzyme catalyses 2 Na(+)(in) + 3 H(+)(out) = 2 Na(+)(out) + 3 H(+)(in). Functionally, na(+)/H(+) antiporter that extrudes sodium in exchange for external protons. The protein is Na(+)/H(+) antiporter NhaB of Shewanella putrefaciens (strain CN-32 / ATCC BAA-453).